Consider the following 128-residue polypeptide: Cyclic ether formation enzyme gkaZ (128 aa).

Positions Met-1 to Ser-36 are cleaved as a signal peptide. 2 helical membrane passes run Leu-61–Trp-81 and Trp-107–Val-127.

The protein belongs to the cyclic ether formation enzyme xenC family.

It localises to the membrane. The protein operates within mycotoxin biosynthesis. Its function is as follows. Cyclic ether formation enzyme; part of the gene cluster that mediates the biosynthesis of GKK1032, fungal natural products containing a macrocyclic para-cyclophane connected to a decahydrofluorene ring system that show potent antitumor activities. Within the pathway, gkaZ functions synergistically with gkaB and gkaX to form the cyclophane. The pathway begins with the PKS-NRPS gkaA which, with the help of the trans-enoyl reductase gkaC, synthesizes the polyketide-tyrosyl acyl thioester product which can be reductively off-loaded by the terminal reductase (R) domain in gkaA. The alpha/beta hydrolase gkaG is then required to catalyze the subsequent Knoevenagel condensation that affords the 3-pyrrolin-2-one ring, whereas the three proteins gkaB, gkaX and gkaZ then function synergistically to form the cyclophane. This chain is Cyclic ether formation enzyme gkaZ, found in Penicillium citrinum.